We begin with the raw amino-acid sequence, 227 residues long: UPF0758 protein Dred_2549 (227 aa).

Residues isoleucine 105–isoleucine 227 form the MPN domain. Zn(2+) contacts are provided by histidine 176, histidine 178, and aspartate 189. The JAMM motif signature appears at histidine 176–aspartate 189.

It belongs to the UPF0758 family.

The protein is UPF0758 protein Dred_2549 of Desulforamulus reducens (strain ATCC BAA-1160 / DSM 100696 / MI-1) (Desulfotomaculum reducens).